The chain runs to 341 residues: MDIEAFDYHLPEALIAQTPLKNRDESRLLILGRQSGYIEHKHFKDVTDYLNEGDTLVLNDTRVMPARLFGMKEETGAKVEMLMLTQIEGNDWEVLLKPAKRIKVGNKLTFGEGKIIAECIEELDQGGRIMRLHYDGILQERLDELGEMPLPPYIKERLDDQERYQTVYAKASGSAAAPTAGLHFTDELLERIKAQGVNIAFITLHVGLGTFRPVSVDNIDDHEMHSEYYQMDEATANLLNSTRDNGNRIISVGTTSTRTLETIMQSSDRFVAKSGWTDIFIFPGFNFKAIDGLITNFHLPKSTLVMLVSAFSSRDYIINAYNQAVASEYRFFSFGDAMLII.

Belongs to the QueA family. Monomer.

Its subcellular location is the cytoplasm. It catalyses the reaction 7-aminomethyl-7-carbaguanosine(34) in tRNA + S-adenosyl-L-methionine = epoxyqueuosine(34) in tRNA + adenine + L-methionine + 2 H(+). It functions in the pathway tRNA modification; tRNA-queuosine biosynthesis. In terms of biological role, transfers and isomerizes the ribose moiety from AdoMet to the 7-aminomethyl group of 7-deazaguanine (preQ1-tRNA) to give epoxyqueuosine (oQ-tRNA). The protein is S-adenosylmethionine:tRNA ribosyltransferase-isomerase of Staphylococcus saprophyticus subsp. saprophyticus (strain ATCC 15305 / DSM 20229 / NCIMB 8711 / NCTC 7292 / S-41).